Here is a 306-residue protein sequence, read N- to C-terminus: Manganese-binding lipoprotein MntA (306 aa).

The N-terminal stretch at 1-18 (MRQGLMAAVLFATFALTG) is a signal peptide. C19 is lipidated: N-palmitoyl cysteine. The S-diacylglycerol cysteine moiety is linked to residue C19. H66, H132, H198, and D278 together coordinate Mn(2+).

This sequence belongs to the bacterial solute-binding protein 9 family. In terms of assembly, the complex is probably composed of two ATP-binding proteins (MntB), two transmembrane proteins (MntC and MntD) and a solute-binding protein (MntA). Interacts with FloT.

It is found in the cell membrane. It localises to the membrane raft. In terms of biological role, probably part of ATP-binding cassette (ABC) transport system MntABCD involved in manganese import. Binds manganese and delivers it to the membrane permease for translocation into the cytoplasm. This is Manganese-binding lipoprotein MntA from Bacillus subtilis (strain 168).